The following is a 573-amino-acid chain: 2-isopropylmalate synthase (573 aa).

Residues 37–314 (PRWLSTDLRD…DPQIDFSNID (278 aa)) form the Pyruvate carboxyltransferase domain. Residues Asp-46, His-253, His-255, and Asn-289 each contribute to the Mg(2+) site. A regulatory domain region spans residues 456 to 573 (NPRNPWGRIQ…VVSAVNRAAR (118 aa)).

Belongs to the alpha-IPM synthase/homocitrate synthase family. LeuA type 2 subfamily. In terms of assembly, homodimer. The cofactor is Mg(2+).

It is found in the cytoplasm. It carries out the reaction 3-methyl-2-oxobutanoate + acetyl-CoA + H2O = (2S)-2-isopropylmalate + CoA + H(+). It participates in amino-acid biosynthesis; L-leucine biosynthesis; L-leucine from 3-methyl-2-oxobutanoate: step 1/4. Catalyzes the condensation of the acetyl group of acetyl-CoA with 3-methyl-2-oxobutanoate (2-ketoisovalerate) to form 3-carboxy-3-hydroxy-4-methylpentanoate (2-isopropylmalate). The sequence is that of 2-isopropylmalate synthase from Streptomyces avermitilis (strain ATCC 31267 / DSM 46492 / JCM 5070 / NBRC 14893 / NCIMB 12804 / NRRL 8165 / MA-4680).